We begin with the raw amino-acid sequence, 317 residues long: Melanocyte-stimulating hormone receptor (317 aa).

Over 1–37 the chain is Extracellular; it reads MPMQGAQKRLLGSLNSTPTATPNLGLAANHTGAPCLE. N-linked (GlcNAc...) asparagine glycosylation is present at asparagine 29. Residues 38–63 traverse the membrane as a helical segment; it reads VSIPDGLFLSLGLVSLVENVLVVAAI. Over 64 to 72 the chain is Cytoplasmic; the sequence is AKNRNLHSP. A helical transmembrane segment spans residues 73–93; sequence MYCFICCLALSDLLVSSSNML. Over 94 to 118 the chain is Extracellular; it reads ETAVILLLEAGALATRASVVQQLQN. The helical transmembrane segment at 119-140 threads the bilayer; that stretch reads TIDVLTCSSMLCSLCFLGAIAV. The Cytoplasmic portion of the chain corresponds to 141-163; sequence DRHVSIFYALRYHSIMTLARARR. Residues 164-183 traverse the membrane as a helical segment; it reads AIAAIWVASVLSSTLFIAYC. Residues 184–191 lie on the Extracellular side of the membrane; sequence DHAXVLLC. The chain crosses the membrane as a helical span at residues 192 to 211; it reads LVVFFLAMLVLMAVLYVHML. Residues 212-240 lie on the Cytoplasmic side of the membrane; the sequence is ARACQHAQGITRLHQRQPPAHQGFGFRGA. Residues 241-266 form a helical membrane-spanning segment; sequence ATLTILLGIFFLCWGPFFLHLTLVVL. Residues 267 to 279 lie on the Extracellular side of the membrane; it reads CPQHLTCSCIFKN. A helical transmembrane segment spans residues 280-300; the sequence is FKVFLTLIICSTIIDPLIYAF. The Cytoplasmic portion of the chain corresponds to 301–317; the sequence is RSQELRRTLKELLLCSW. A lipid anchor (S-palmitoyl cysteine) is attached at cysteine 315.

Belongs to the G-protein coupled receptor 1 family. As to quaternary structure, interacts with MGRN1, but does not undergo MGRN1-mediated ubiquitination; this interaction competes with GNAS-binding and thus inhibits agonist-induced cAMP production. Interacts with OPN3; the interaction results in a decrease in MC1R-mediated cAMP signaling and ultimately a decrease in melanin production in melanocytes.

It is found in the cell membrane. Receptor for MSH (alpha, beta and gamma) and ACTH. The activity of this receptor is mediated by G proteins which activate adenylate cyclase. Mediates melanogenesis, the production of eumelanin (black/brown) and phaeomelanin (red/yellow), via regulation of cAMP signaling in melanocytes. The protein is Melanocyte-stimulating hormone receptor (MC1R) of Ateles paniscus (Black spider monkey).